Consider the following 325-residue polypeptide: Ribosomal RNA small subunit methyltransferase H (325 aa).

S-adenosyl-L-methionine-binding positions include 42–44 (GGH), D62, F86, D105, and Q112.

The protein belongs to the methyltransferase superfamily. RsmH family.

The protein localises to the cytoplasm. It catalyses the reaction cytidine(1402) in 16S rRNA + S-adenosyl-L-methionine = N(4)-methylcytidine(1402) in 16S rRNA + S-adenosyl-L-homocysteine + H(+). Its function is as follows. Specifically methylates the N4 position of cytidine in position 1402 (C1402) of 16S rRNA. This Cupriavidus metallidurans (strain ATCC 43123 / DSM 2839 / NBRC 102507 / CH34) (Ralstonia metallidurans) protein is Ribosomal RNA small subunit methyltransferase H.